A 618-amino-acid polypeptide reads, in one-letter code: 1-aminocyclopropane-1-carboxylate synthase-like protein 1 (618 aa).

Residues 11–26 show a composition bias toward low complexity; it reads QGTQTPAAQTTCAPST. Residues 11-54 form a disordered region; the sequence is QGTQTPAAQTTCAPSTMSSSSRPPLETLQAQSVSADETPGSALP. Residues 27-45 show a composition bias toward polar residues; it reads MSSSSRPPLETLQAQSVSA. E122 is a substrate binding site. K340 bears the N6-(pyridoxal phosphate)lysine mark.

The protein belongs to the class-I pyridoxal-phosphate-dependent aminotransferase family.

This chain is 1-aminocyclopropane-1-carboxylate synthase-like protein 1 (accs), found in Takifugu rubripes (Japanese pufferfish).